Reading from the N-terminus, the 292-residue chain is MNRERQKKPEWLKLKLSTGEHFAATRQLLSGLRLNTVCRSAMCPNLQECWSKGTATFMLLGSVCTRTCRFCAVDKTVLPVPPDPEEPEKIALAVKSMSLKHVVLTSVNRDDLPDGGSGHWVSSIRSIRSLNPEVSIECLVPDFDGITANADRVMQEAPEVLNHNIETVPSLYPAVRPQADYRRSLELIERAKAVFRLSTKSGMMVGMGETGDEVAASLGDLRASRCDIVTIGQYLQPTAAHLPVNRYVTPDEFEEYKNRAESLGFRHVQSGPFVRSSYHAEEFVAARHIERC.

Positions 38, 43, 49, 64, 68, 71, and 277 each coordinate [4Fe-4S] cluster. One can recognise a Radical SAM core domain in the interval 50–266 (WSKGTATFML…KNRAESLGFR (217 aa)).

Belongs to the radical SAM superfamily. Lipoyl synthase family. It depends on [4Fe-4S] cluster as a cofactor.

It localises to the cytoplasm. It carries out the reaction [[Fe-S] cluster scaffold protein carrying a second [4Fe-4S](2+) cluster] + N(6)-octanoyl-L-lysyl-[protein] + 2 oxidized [2Fe-2S]-[ferredoxin] + 2 S-adenosyl-L-methionine + 4 H(+) = [[Fe-S] cluster scaffold protein] + N(6)-[(R)-dihydrolipoyl]-L-lysyl-[protein] + 4 Fe(3+) + 2 hydrogen sulfide + 2 5'-deoxyadenosine + 2 L-methionine + 2 reduced [2Fe-2S]-[ferredoxin]. Its pathway is protein modification; protein lipoylation via endogenous pathway; protein N(6)-(lipoyl)lysine from octanoyl-[acyl-carrier-protein]: step 2/2. Functionally, catalyzes the radical-mediated insertion of two sulfur atoms into the C-6 and C-8 positions of the octanoyl moiety bound to the lipoyl domains of lipoate-dependent enzymes, thereby converting the octanoylated domains into lipoylated derivatives. In Chlorobium limicola (strain DSM 245 / NBRC 103803 / 6330), this protein is Lipoyl synthase.